The sequence spans 504 residues: D-alanine--D-alanyl carrier protein ligase (504 aa).

Residue 152–153 (TS) participates in ATP binding. D197 lines the D-alanine pocket. 292-297 (NTYGPT) provides a ligand contact to ATP. Position 301 (V301) interacts with D-alanine. ATP is bound by residues D383, 394–397 (YNGR), and K492. K492 provides a ligand contact to D-alanine.

Belongs to the ATP-dependent AMP-binding enzyme family. DltA subfamily.

The protein localises to the cytoplasm. The catalysed reaction is holo-[D-alanyl-carrier protein] + D-alanine + ATP = D-alanyl-[D-alanyl-carrier protein] + AMP + diphosphate. The protein operates within cell wall biogenesis; lipoteichoic acid biosynthesis. Functionally, catalyzes the first step in the D-alanylation of lipoteichoic acid (LTA), the activation of D-alanine and its transfer onto the D-alanyl carrier protein (Dcp) DltC. In an ATP-dependent two-step reaction, forms a high energy D-alanyl-AMP intermediate, followed by transfer of the D-alanyl residue as a thiol ester to the phosphopantheinyl prosthetic group of the Dcp. D-alanylation of LTA plays an important role in modulating the properties of the cell wall in Gram-positive bacteria, influencing the net charge of the cell wall. The polypeptide is D-alanine--D-alanyl carrier protein ligase (Bacillus cereus (strain Q1)).